Here is a 300-residue protein sequence, read N- to C-terminus: Tyrosine recombinase XerC (300 aa).

The Core-binding (CB) domain maps to 1 to 86 (MESVLDAFDQ…AVKTFTAWAV (86 aa)). The region spanning 107 to 294 (TLPAVLRQDQ…TVARLRAVHD (188 aa)) is the Tyr recombinase domain. Residues R151, K175, H246, R249, and H272 contribute to the active site. Y281 functions as the O-(3'-phospho-DNA)-tyrosine intermediate in the catalytic mechanism.

The protein belongs to the 'phage' integrase family. XerC subfamily. Forms a cyclic heterotetrameric complex composed of two molecules of XerC and two molecules of XerD.

It localises to the cytoplasm. Site-specific tyrosine recombinase, which acts by catalyzing the cutting and rejoining of the recombining DNA molecules. The XerC-XerD complex is essential to convert dimers of the bacterial chromosome into monomers to permit their segregation at cell division. It also contributes to the segregational stability of plasmids. This is Tyrosine recombinase XerC from Mycobacterium sp. (strain JLS).